The sequence spans 143 residues: Flagellar assembly factor FliW (143 aa).

The protein belongs to the FliW family. Interacts with translational regulator CsrA and flagellin(s).

It localises to the cytoplasm. Acts as an anti-CsrA protein, binds CsrA and prevents it from repressing translation of its target genes, one of which is flagellin. Binds to flagellin and participates in the assembly of the flagellum. This chain is Flagellar assembly factor FliW, found in Clostridium botulinum (strain Okra / Type B1).